We begin with the raw amino-acid sequence, 488 residues long: Protein nucleotidyltransferase YdiU (488 aa).

ATP-binding residues include Gly-90, Gly-92, Arg-93, Lys-113, Asp-125, Gly-126, Arg-176, and Arg-183. Asp-252 serves as the catalytic Proton acceptor. 2 residues coordinate Mg(2+): Asn-253 and Asp-262. Position 262 (Asp-262) interacts with ATP.

Belongs to the SELO family. Requires Mg(2+) as cofactor. It depends on Mn(2+) as a cofactor.

The catalysed reaction is L-seryl-[protein] + ATP = 3-O-(5'-adenylyl)-L-seryl-[protein] + diphosphate. The enzyme catalyses L-threonyl-[protein] + ATP = 3-O-(5'-adenylyl)-L-threonyl-[protein] + diphosphate. It carries out the reaction L-tyrosyl-[protein] + ATP = O-(5'-adenylyl)-L-tyrosyl-[protein] + diphosphate. It catalyses the reaction L-histidyl-[protein] + UTP = N(tele)-(5'-uridylyl)-L-histidyl-[protein] + diphosphate. The catalysed reaction is L-seryl-[protein] + UTP = O-(5'-uridylyl)-L-seryl-[protein] + diphosphate. The enzyme catalyses L-tyrosyl-[protein] + UTP = O-(5'-uridylyl)-L-tyrosyl-[protein] + diphosphate. Its function is as follows. Nucleotidyltransferase involved in the post-translational modification of proteins. It can catalyze the addition of adenosine monophosphate (AMP) or uridine monophosphate (UMP) to a protein, resulting in modifications known as AMPylation and UMPylation. The chain is Protein nucleotidyltransferase YdiU from Thiobacillus denitrificans (strain ATCC 25259 / T1).